The primary structure comprises 608 residues: Kelch-like protein 10 (608 aa).

Residues 39-106 (CDVVIKVNGF…AYTRTVPITP (68 aa)) enclose the BTB domain. Kelch repeat units lie at residues 292-339 (ILFA…YLKG), 340-386 (YVYI…VLGN), 388-433 (IYAM…TLYG), 434-480 (KVYI…AYGE), 481-527 (HVYA…VVDD), and 529-574 (LFVV…VVPG). Position 501 is a phosphoserine (Ser-501).

Self-associates. Interacts with CUL3; indicative for the participation in an E3 ubiquitin ligase complex.

Its subcellular location is the cytoplasm. Its pathway is protein modification; protein ubiquitination. Functionally, may be a substrate-specific adapter of a CUL3-based E3 ubiquitin-protein ligase complex which mediates the ubiquitination and subsequent proteasomal degradation of target proteins during spermatogenesis. In Homo sapiens (Human), this protein is Kelch-like protein 10 (KLHL10).